A 101-amino-acid chain; its full sequence is MIRYVLVIITCFLVAAKSHVTIGPVPNNLGFPDRSILLALVAPTCEPELEGLVDECVNNVTIRNVCYDCFREGLTKVYSYCCHKYNHMYEWCLEYFSGEMK.

A signal peptide spans 1 to 16 (MIRYVLVIITCFLVAA).

Contains 3 disulfide bonds. In terms of tissue distribution, expressed by the venom gland.

Its subcellular location is the secreted. The protein is Venom protein 214 of Lychas mucronatus (Chinese swimming scorpion).